Consider the following 290-residue polypeptide: Ankyrin repeat and SOCS box protein 9 (290 aa).

M1 carries the post-translational modification N-acetylmethionine. Over residues 1 to 11 (MDGEQRGRSDR) the composition is skewed to basic and acidic residues. Residues 1 to 20 (MDGEQRGRSDRPGGSPHLPF) are disordered. ANK repeat units lie at residues 31–60 (SDWS…PVNI), 64–93 (DHVS…QVNG), 97–126 (DWRT…TPHP), 129–158 (ELAS…NIDY), 162–191 (HLGT…SVNQ), and 194–223 (GLDS…NAQA). One can recognise an SOCS box domain in the interval 236-290 (PLESPLIQIFLQNEGPQSLRQLCRLRIRKCFGIRQHHKISELLLPEDLKRFLLHL).

It belongs to the ankyrin SOCS box (ASB) family. As to quaternary structure, substrate-recognition component of the ECS(ASB9) complex, composed of ASB9, CUL5, ELOB, ELOC and RNF7/RBX2.

The protein resides in the mitochondrion. Its pathway is protein modification; protein ubiquitination. In terms of biological role, substrate-recognition component of a cullin-5-RING E3 ubiquitin-protein ligase complex (ECS complex, also named CRL5 complex), which mediates the ubiquitination and subsequent proteasomal degradation of target proteins. The ECS(ASB9) complex catalyzes ubiquitination of creatine kinases CKB and CKMT1A. The chain is Ankyrin repeat and SOCS box protein 9 from Mus musculus (Mouse).